The primary structure comprises 182 residues: Large ribosomal subunit protein uL10 (182 aa).

The protein belongs to the universal ribosomal protein uL10 family. Part of the ribosomal stalk of the 50S ribosomal subunit. The N-terminus interacts with L11 and the large rRNA to form the base of the stalk. The C-terminus forms an elongated spine to which L12 dimers bind in a sequential fashion forming a multimeric L10(L12)X complex.

Functionally, forms part of the ribosomal stalk, playing a central role in the interaction of the ribosome with GTP-bound translation factors. The polypeptide is Large ribosomal subunit protein uL10 (Leptothrix cholodnii (strain ATCC 51168 / LMG 8142 / SP-6) (Leptothrix discophora (strain SP-6))).